A 52-amino-acid chain; its full sequence is Phospholamban (52 aa).

N-acetylmethionine is present on Met-1. The Cytoplasmic portion of the chain corresponds to 1-31 (MDKVQYLTRSAIRRASTIEMPQQARQNLQNL). Ser-16 carries the post-translational modification Phosphoserine; by PKA and DMPK. Thr-17 is modified (phosphothreonine; by CaMK2). Residues 32-52 (FINFCLILICLLLICIIVMLL) form a helical membrane-spanning segment. Cys-36 carries the S-palmitoyl cysteine lipid modification.

This sequence belongs to the phospholamban family. Homopentamer. Can also form heterooligomers with other sarcoplasmic/endoplasmic reticulum calcium ATPase (SERCA) regulators ARLN, ERLN, SLN and STRIT1/DWORF. Monomer. Interacts with HAX1. Interacts as a monomer with ATP2A2; the interaction decreases ATP2A2 Ca(2+) affinity. Interacts with VMP1; VMP1 competes with PLN and SLN to prevent them from forming an inhibitory complex with ATP2A2. Interacts with S100A1 in a Ca(2+)-dependent manner. Post-translationally, phosphorylation by DMPK may stimulate sarcoplasmic reticulum calcium uptake in cardiomyocytes. Phosphorylation by PKA abolishes the inhibition of ATP2A2-mediated calcium uptake. Phosphorylated at Thr-17 by CaMK2, and in response to beta-adrenergic stimulation. Palmitoylated by ZDHHC16, promoting formation of the homopentamer. In terms of processing, in elongated spermatids, proteolytically cleaved by SPPL2C which modulates intracellular Ca(2+) homeostasis. In terms of tissue distribution, heart.

The protein resides in the endoplasmic reticulum membrane. It localises to the sarcoplasmic reticulum membrane. The protein localises to the mitochondrion membrane. It is found in the membrane. Functionally, reversibly inhibits the activity of ATP2A2/SERCA2 in cardiac sarcoplasmic reticulum by decreasing the apparent affinity of the ATPase for Ca(2+). Binds preferentially to the ATP-bound E1 conformational form of ATP2A2 which predominates at low Ca(2+) concentrations during the diastolic phase of the cardiac cycle. Inhibits ATP2A2 Ca(2+) affinity by disrupting its allosteric activation by ATP. Modulates the contractility of the heart muscle in response to physiological stimuli via its effects on ATP2A2. Modulates calcium re-uptake during muscle relaxation and plays an important role in calcium homeostasis in the heart muscle. The degree of ATP2A2 inhibition depends on the oligomeric state of PLN. ATP2A2 inhibition is alleviated by PLN phosphorylation. Also inhibits the activity of ATP2A3/SERCA3. Controls intracellular Ca(2+) levels in elongated spermatids and may play a role in germ cell differentiation. In the thalamic reticular nucleus of the brain, plays a role in the regulation of sleep patterns and executive functioning. The sequence is that of Phospholamban from Canis lupus familiaris (Dog).